Reading from the N-terminus, the 177-residue chain is Large ribosomal subunit protein uL6 (177 aa).

The protein belongs to the universal ribosomal protein uL6 family. In terms of assembly, part of the 50S ribosomal subunit.

Its function is as follows. This protein binds to the 23S rRNA, and is important in its secondary structure. It is located near the subunit interface in the base of the L7/L12 stalk, and near the tRNA binding site of the peptidyltransferase center. The sequence is that of Large ribosomal subunit protein uL6 from Methanocella arvoryzae (strain DSM 22066 / NBRC 105507 / MRE50).